Consider the following 657-residue polypeptide: MLSIINLTSKTIKEVNKGVDLVIGFFDGIHKGHAKLFKQSDRFNLLTFDHIPKKQRLLYPKVDEIEQLSALSGLEQLLVYDLLNNNLSAQEFIDNYIKLIQPKRIIVGSDFKFGSDQVDYSLFAKNGYEVVVVKKDHCSTSEIKKLIINCDLDQANKLLLTPFYLKGTVIKNAQRGRTIGFVTANIILDNQLIELTEGSYVCKVIVDNKTYQGICFIGKPKTFDEKQRQCEAHIFDFDQDIYGKKIKVELYQFIRPTVKFNSINELKEAIENDKKAALSFFHKQEKPKVVVALSGGVDSAVCAYLLQQQGYDVVAAFMQNWDKDLNFELLSDHADDQIQGCDAKQDYEDTQKLCEQLKIKLYHFNFVEQYWNDVFLKVLEDYKKGLTPNPDVLCNQFGKFGWFINALRKQFGDDIKIAFGHYAKLITKDDEVFLVHTKDHNKDQTYFLTMLKKEQLKNIIFPLSELDKPTVREIAKQANLYVANKKDSTGICFIGERNFKQFLSNYLAIKKGPIILIDENKKIGEHDGLYFYTIGQSRRLHVGGTKEKIFVCDKDYNNNTLYVCYESSKDQYLSSVSCELEKFNWLIDTKDQLFNKKLWIRFRHRQKLQECEIVSYHDDKVIVKYTKQIGVTPGQYGVIYDQNLWVVGGGKITKIIK.

Residues 1–141 (MLSIINLTSK…VVKKDHCSTS (141 aa)) are FMN adenylyltransferase. The interval 158 to 282 (LLLTPFYLKG…DKKAALSFFH (125 aa)) is riboflavin kinase. The tract at residues 283–657 (KQEKPKVVVA…GGGKITKIIK (375 aa)) is tRNA-specific 2-thiouridylase MnmA. Residues 292 to 299 (ALSGGVDS) and M318 each bind ATP. The interval 389 to 391 (NPD) is interaction with target base in tRNA. C394 acts as the Nucleophile in catalysis. C394 and C492 form a disulfide bridge. G420 serves as a coordination point for ATP. The segment at 442-444 (KDQ) is interaction with tRNA. Catalysis depends on C492, which acts as the Cysteine persulfide intermediate.

This sequence in the N-terminal section; belongs to the RibF family. In the C-terminal section; belongs to the MnmA/TRMU family.

The protein localises to the cytoplasm. It catalyses the reaction riboflavin + ATP = FMN + ADP + H(+). It carries out the reaction FMN + ATP + H(+) = FAD + diphosphate. The enzyme catalyses S-sulfanyl-L-cysteinyl-[protein] + uridine(34) in tRNA + AH2 + ATP = 2-thiouridine(34) in tRNA + L-cysteinyl-[protein] + A + AMP + diphosphate + H(+). It functions in the pathway cofactor biosynthesis; FAD biosynthesis; FAD from FMN: step 1/1. Its pathway is cofactor biosynthesis; FMN biosynthesis; FMN from riboflavin (ATP route): step 1/1. Functionally, involved in FAD and FMN biosynthesis. Its function is as follows. Catalyzes the 2-thiolation of uridine at the wobble position (U34) of tRNA, leading to the formation of s(2)U34. This chain is Trifunctional protein RibF/MnmA (ribF/mnmA), found in Mycoplasmoides gallisepticum (strain R(low / passage 15 / clone 2)) (Mycoplasma gallisepticum).